The following is a 583-amino-acid chain: Probable cysteine--tRNA ligase, mitochondrial (583 aa).

Residue cysteine 82 coordinates Zn(2+). Glycine 83 serves as a coordination point for L-cysteine. The 'HIGH' region signature appears at 84-94 (PTVYSSSHIGH). Threonine 123 is an L-cysteine binding site. Residues 128 to 131 (KIIN) carry the 'KIIK' region motif. Positions 271, 296, and 300 each coordinate Zn(2+). Histidine 296 lines the L-cysteine pocket. The 'KMSKS' region motif lies at 337–341 (KMSKS). Position 340 (lysine 340) interacts with ATP.

It belongs to the class-I aminoacyl-tRNA synthetase family. The cofactor is Zn(2+).

Its subcellular location is the mitochondrion. The enzyme catalyses tRNA(Cys) + L-cysteine + ATP = L-cysteinyl-tRNA(Cys) + AMP + diphosphate. Mitochondrial cysteine-specific aminoacyl-tRNA synthetase that catalyzes the ATP-dependent ligation of cysteine to tRNA(Cys). Its function is as follows. In addition to its role as an aminoacyl-tRNA synthetase, has also cysteine persulfide synthase activity. Produces reactive persulfide species such as cysteine persulfide (CysSSH) from substrate cysteine and mediate direct incorporation of CysSSH into proteins during translations, resulting in protein persulfides and polysulfides. CysSSHs behave as potent antioxidants and cellular protectants. This is Probable cysteine--tRNA ligase, mitochondrial (mcysS) from Dictyostelium discoideum (Social amoeba).